Reading from the N-terminus, the 362-residue chain is O-methyltransferase 13 (362 aa).

S-adenosyl-L-homocysteine contacts are provided by serine 181, glycine 205, aspartate 228, aspartate 248, and lysine 262. Residue aspartate 228 participates in S-adenosyl-L-methionine binding. Residue histidine 266 is the Proton acceptor of the active site.

It belongs to the class I-like SAM-binding methyltransferase superfamily. Cation-independent O-methyltransferase family. Homodimer. As to expression, mainly expressed in vascular and cortical tissues.

It carries out the reaction dopamine + S-adenosyl-L-methionine = 3-methoxytyramine + S-adenosyl-L-homocysteine + H(+). Its pathway is aromatic compound metabolism. The protein operates within alkaloid biosynthesis. In terms of biological role, O-methyltransferase participating in the biosynthesis of natural products derived from phenylethylamine, including mescaline, a natural hallucinogen potentially used in psychotherapeutic treatments. Catalyzes the O-methylation of dopamine and 4,5-dihydroxy-3-methoxyphenethylamine. The protein is O-methyltransferase 13 of Lophophora williamsii (Peyote).